A 161-amino-acid polypeptide reads, in one-letter code: MPSFDTVCEANFVEVKNAVENTAKEIGTRFDFKGTSAAVELKDKEITLYGDADFQLQQVEDILRNKLTKRNVDVRFLDAQKPQKIGGDKLKQVVKVKNGIDSEQAKKIQRLIKDSKLKLQAAIQEDKVRVTGAKRDDLQAAMALIRKDIADLPLTFDNFRD.

It belongs to the YajQ family.

Functionally, nucleotide-binding protein. In Acidovorax sp. (strain JS42), this protein is Nucleotide-binding protein Ajs_2750.